Consider the following 549-residue polypeptide: Frizzled-7-A (549 aa).

The N-terminal stretch at 1–22 (MSSTVSLLFCCLFLQLCPSAQQ) is a signal peptide. Over 23–231 (YHGEKGISVP…EEEVRFARLW (209 aa)) the chain is Extracellular. The region spanning 32 to 151 (PDHGFCQPIS…HGAGEICVGQ (120 aa)) is the FZ domain. Cystine bridges form between Cys37–Cys98, Cys45–Cys91, Cys82–Cys119, Cys108–Cys148, and Cys112–Cys136. The N-linked (GlcNAc...) asparagine glycan is linked to Asn51. N-linked (GlcNAc...) asparagine glycosylation is present at Asn152. A helical transmembrane segment spans residues 232-252 (VGIWAILCCISTLFTVLTYLV). The Cytoplasmic portion of the chain corresponds to 253–263 (DMRRFSYPERP). Residues 264-284 (IIFLSGCYFMVAVAYTAGFLL) form a helical membrane-spanning segment. Residues 285 to 311 (EERAVCVERFSEDSYRTVAQGTKKEGC) lie on the Extracellular side of the membrane. The chain crosses the membrane as a helical span at residues 312–332 (TILFMILYFFGMASSIWWVIL). At 333 to 354 (SLTWFLSAGMKWGHEAIEANSQ) the chain is on the cytoplasmic side. The chain crosses the membrane as a helical span at residues 355–375 (YFHLAAWAVPAVKTITILAMG). The Extracellular portion of the chain corresponds to 376–398 (QVDGDVLSGVCYVGINSVDSLRG). Residues 399-419 (FVLAPLFVYLFIGTSFLLAGF) form a helical membrane-spanning segment. Residues 420–445 (VSLFRIRTIMKHDGTKTEKLEKLMVR) lie on the Cytoplasmic side of the membrane. Residues 446 to 466 (IGVFSVMYTVPATIVLACYFY) traverse the membrane as a helical segment. Over 467–503 (EQAFRDTWEKTWLVQTCKGYAVPCPNYNFAPMSPDFT) the chain is Extracellular. The helical transmembrane segment at 504-524 (VFMIKYLMTMIVGITSSFWIW) threads the bilayer. Over 525–549 (SGKTLQSWRRFYHRLSNGSKGETAV) the chain is Cytoplasmic. Residues 527-532 (KTLQSW) carry the Lys-Thr-X-X-X-Trp motif, mediates interaction with the PDZ domain of Dvl family members motif. The PDZ-binding motif lies at 547–549 (TAV).

Belongs to the G-protein coupled receptor Fz/Smo family. In terms of assembly, interacts with wnt11 and sdc4. The extracellular domain interacts with the extracellular domain of pcdh8/papc. In terms of tissue distribution, expressed in the animal region of cleavage stage embryos. During gastrulation, broadly expressed on the dorsal side of the embryo in deep mesodermal cells surrounding the blastopore lip and in presumptive anterior neuroectoderm. During neurulation, becomes progressively more restricted to the dorsal epidermis, neural plate, and neural tube. Expressed in the cranial neural crest of neurulae and tailbud embryos as well as the pronephros of tailbud embryos. Localized to the brain of neurulae, tailbud embryos and tadpoles. In tadpoles, strongly expressed in the eye and developing heart.

The protein resides in the cell membrane. The protein localises to the endosome membrane. Receptor for Wnt proteins. Acts in both canonical and non-canonical Wnt pathways. Although different papers report differing Wnt preferences, wnt5a, wnt8b and wnt11 have been proposed as synergists. In the canonical Wnt pathway, acts via beta-catenin to promote the expression of the dorsal genes siamois, twin and nodal3 and to establish the dorsal axis of the embryo and induce dorsal mesoderm formation. In a non-canonical Wnt/planar cell polarity (PCP) pathway, acts with sdc4 and dvl2/dsh to regulate convergent extension cell movements during gastrulation. Triggers phosphorylation of dvl2/dsh and its translocation to the plasma membrane. In a third branch of Wnt signaling, acts in a non-canonical pathway via trimeric G proteins, and independently of dvl2/dsh, to recruit protein kinase C (PKC) to the membrane and thus activate PKC. PKC signaling controls cell sorting and tissue separation during gastrulation. The protein is Frizzled-7-A (fzd7-a) of Xenopus laevis (African clawed frog).